The following is a 726-amino-acid chain: MALSVHPSIGVARLGNANTDNFVLNPMEIGGLPYEHDVDLKPTTTVVNFKDEAGCIRRQGQVFKVFGASNEELTLDSPNVKNIEWTVHLANKKAAWYEFRELNGNLLYGRDNSYSARGVPWRNASKTASSERQSLIIDLGPRSVSGVMATVEISINNIPETYLHPSYPSGELLQGSKHFESLGTLRTDSQGRLIVLGGYGFAGGNTDLSGYGGGDDWYDDISDGSVTCVVTYSDDSSETSTAWMVVGSPDFAPEIVNISTLSDTCFDVGVRNFDLVPDMYDSATGHYKSDYVANFDRDILPIIQRISQYQWVSNVQSMSGFFSFQFDYRDGSAANKANRMKYYNYFRQLDNKVIGDYDQPQQVLMSSEVEGDILPLMPMNSGSNSVSSSNFYDLTDNVVEKFLALDATQLFLLGQWAEGEFTAGPADDYPVSDMDTASIGNCVGLPMCPGIEMTWSLQNPVIYKDAYQIKHYQDKAYFDVNGLTPERDECEEETGCEPGDLTKRMACPWQADFFNCTIQTVNFSEPSVNKASQTETVTSRTHYEWGNLPAGVSVPDQSSVSATKNVDEKVPLPPAYYSYWWPPQSPWDVLTGELDTEGQLHSHLPAGQQINYARGINSYSQMVEHWSALAFIRDRNQNNDGFPFFTETERNHELFDFKEVLVGQVTGNSEDNETSLPVFFINANKESLEGKGTKKGKLMASYFEERAFSKVRSSNIRPRSGTRMRG.

Positions 516 to 581 (CTIQTVNFSE…LPPAYYSYWW (66 aa)) form a cross-link, 4'-cysteinyl-tryptophylquinone (Cys-Trp). The residue at position 581 (tryptophan 581) is a Tryptophylquinone.

As to quaternary structure, homotetramer. Requires cysteine tryptophylquinone residue as cofactor. The cysteine tryptophylquinone (CTQ) is generated by oxidation of the indole ring of a tryptophan residue to form tryptophylquinone, followed by covalent cross-linking with a cysteine residue.

It localises to the secreted. It catalyses the reaction L-lysine + O2 + H2O = (S)-2-amino-6-oxohexanoate + H2O2 + NH4(+). With respect to regulation, inhibited by aminoguanidine, amiloride and beta-aminopropionitrile. Has antibacterial activity against a wide spectrum of Gram-positive and Gram-negative bacteria including nosocomial isolates of S.aureus and Pseudomonas sp. The antimicrobial activity is due to hydrogen peroxide generated by its lysine oxidase activity. Also has autotoxic activity. Involved in biofilm differentiation; responsible for cell death within microcolonies during biofilm development which is linked to the generation of a phenotypically diverse dispersal population and thus may play a role in colonization. The protein is L-lysine 6-oxidase (lodA) of Marinomonas mediterranea (strain ATCC 700492 / JCM 21426 / NBRC 103028 / MMB-1).